Reading from the N-terminus, the 499-residue chain is Lysine--tRNA ligase (499 aa).

Residues glutamate 408 and glutamate 415 each coordinate Mg(2+).

The protein belongs to the class-II aminoacyl-tRNA synthetase family. In terms of assembly, homodimer. Mg(2+) is required as a cofactor.

The protein resides in the cytoplasm. It catalyses the reaction tRNA(Lys) + L-lysine + ATP = L-lysyl-tRNA(Lys) + AMP + diphosphate. This Agrobacterium fabrum (strain C58 / ATCC 33970) (Agrobacterium tumefaciens (strain C58)) protein is Lysine--tRNA ligase.